The following is a 528-amino-acid chain: Linear element-associated protein hop1 (528 aa).

Residues 11-212 (TKSDFTLKNL…RGEFKDIVSF (202 aa)) form the HORMA domain. Residues 334 to 385 (LLNCECGDSTEDSEMFQCERCDGWVHCACYGFESDSDPRQPNQLLCYTCLLV) form a PHD-type zinc finger. Zn(2+) is bound by residues C337, C339, C351, C354, H359, C362, C379, and C382. The interval 507–528 (RPKKVSKTSNTKETDTMKPLRI) is disordered. The span at 516 to 528 (NTKETDTMKPLRI) shows a compositional bias: basic and acidic residues.

In terms of assembly, interacts (via N-terminus) with rec10; the interaction is direct. Interacts (via C-terminus) with rec15 (via C-terminus); the interaction is direct.

Its subcellular location is the nucleus. The protein localises to the chromosome. In terms of biological role, facilitates initiation of meiotic recombination and DNA double-strand break (DSB) formation at DSB hotspot sites by enhancing the interaction between rec10 and rec15. This Schizosaccharomyces pombe (strain 972 / ATCC 24843) (Fission yeast) protein is Linear element-associated protein hop1.